We begin with the raw amino-acid sequence, 211 residues long: MRDPVETYMNLVPMVVEQTNRGERAYDIFSRLLKERIIFLTGPVEDGMSTLVVAQLLFLEAENPKKEISMYINSPGGVVTSGLAIYDTMQFIRPPVSTLCTGQAASMGSLLLAAGEKDMRFSLPNARIMVHQPSGGFQGQATDIMLHAQEILNLKKRLNEIYVKHTGQTYKTIEDALERDKFLTANDAKEFGLVDRVIDKRAEEPAAAKTQ.

The Nucleophile role is filled by serine 106. Histidine 131 is an active-site residue.

Belongs to the peptidase S14 family. In terms of assembly, fourteen ClpP subunits assemble into 2 heptameric rings which stack back to back to give a disk-like structure with a central cavity, resembling the structure of eukaryotic proteasomes.

The protein localises to the cytoplasm. The catalysed reaction is Hydrolysis of proteins to small peptides in the presence of ATP and magnesium. alpha-casein is the usual test substrate. In the absence of ATP, only oligopeptides shorter than five residues are hydrolyzed (such as succinyl-Leu-Tyr-|-NHMec, and Leu-Tyr-Leu-|-Tyr-Trp, in which cleavage of the -Tyr-|-Leu- and -Tyr-|-Trp bonds also occurs).. Functionally, cleaves peptides in various proteins in a process that requires ATP hydrolysis. Has a chymotrypsin-like activity. Plays a major role in the degradation of misfolded proteins. This Bradyrhizobium diazoefficiens (strain JCM 10833 / BCRC 13528 / IAM 13628 / NBRC 14792 / USDA 110) protein is ATP-dependent Clp protease proteolytic subunit 2.